Consider the following 114-residue polypeptide: DNA-directed RNA polymerase subunit omega (114 aa).

It belongs to the RNA polymerase subunit omega family. As to quaternary structure, the RNAP catalytic core consists of 2 alpha, 1 beta, 1 beta' and 1 omega subunit. When a sigma factor is associated with the core the holoenzyme is formed, which can initiate transcription.

The catalysed reaction is RNA(n) + a ribonucleoside 5'-triphosphate = RNA(n+1) + diphosphate. In terms of biological role, promotes RNA polymerase assembly. Latches the N- and C-terminal regions of the beta' subunit thereby facilitating its interaction with the beta and alpha subunits. This is DNA-directed RNA polymerase subunit omega from Erythrobacter litoralis (strain HTCC2594).